The chain runs to 283 residues: Putative pyruvate, phosphate dikinase regulatory protein (283 aa).

An ADP-binding site is contributed by Gly-156–Thr-163.

The protein belongs to the pyruvate, phosphate/water dikinase regulatory protein family. PDRP subfamily.

It carries out the reaction N(tele)-phospho-L-histidyl/L-threonyl-[pyruvate, phosphate dikinase] + ADP = N(tele)-phospho-L-histidyl/O-phospho-L-threonyl-[pyruvate, phosphate dikinase] + AMP + H(+). The enzyme catalyses N(tele)-phospho-L-histidyl/O-phospho-L-threonyl-[pyruvate, phosphate dikinase] + phosphate + H(+) = N(tele)-phospho-L-histidyl/L-threonyl-[pyruvate, phosphate dikinase] + diphosphate. In terms of biological role, bifunctional serine/threonine kinase and phosphorylase involved in the regulation of the pyruvate, phosphate dikinase (PPDK) by catalyzing its phosphorylation/dephosphorylation. The sequence is that of Putative pyruvate, phosphate dikinase regulatory protein from Desulfotalea psychrophila (strain LSv54 / DSM 12343).